The primary structure comprises 51 residues: Lipid-anchored plasma membrane protein CPP3 (51 aa).

Positions 1 to 28 (MRHHQNMHYAPQQQPVYVQQPPPRRESG) are disordered.

The protein belongs to the CYSTM1 family. Post-translationally, palmitoylated near the C-terminus.

The protein resides in the cell membrane. The chain is Lipid-anchored plasma membrane protein CPP3 from Saccharomyces cerevisiae (strain ATCC 204508 / S288c) (Baker's yeast).